Consider the following 225-residue polypeptide: uncharacterized protein (225 aa).

This is an uncharacterized protein from Ureaplasma parvum serovar 3 (strain ATCC 700970).